Here is a 675-residue protein sequence, read N- to C-terminus: Polyphosphate kinase (675 aa).

Position 42 (N42) interacts with ATP. Mg(2+)-binding residues include R372 and R401. Residue H431 is the Phosphohistidine intermediate of the active site. Residues Y464, R558, and H586 each coordinate ATP.

This sequence belongs to the polyphosphate kinase 1 (PPK1) family. The cofactor is Mg(2+). An intermediate of this reaction is the autophosphorylated ppk in which a phosphate is covalently linked to a histidine residue through a N-P bond.

It catalyses the reaction [phosphate](n) + ATP = [phosphate](n+1) + ADP. Functionally, catalyzes the reversible transfer of the terminal phosphate of ATP to form a long-chain polyphosphate (polyP). In Helicobacter pylori (strain J99 / ATCC 700824) (Campylobacter pylori J99), this protein is Polyphosphate kinase.